Consider the following 462-residue polypeptide: Calcitonin gene-related peptide type 1 receptor (462 aa).

An N-terminal signal peptide occupies residues 1 to 22 (MEKKYILYFLFLLPFFMILVIA). Residues 23–140 (ETEEENPDDL…NTHEKVQTAL (118 aa)) lie on the Extracellular side of the membrane. 3 disulfide bridges follow: Cys49/Cys75, Cys66/Cys106, and Cys89/Cys128. 3 N-linked (GlcNAc...) asparagine glycosylation sites follow: Asn67, Asn119, and Asn124. A helical membrane pass occupies residues 141-165 (NLFYLTIIGHGLSIASLLISLGIFF). Residues 166 to 176 (YFKSLSCQRIT) lie on the Cytoplasmic side of the membrane. A helical membrane pass occupies residues 177-199 (LHKNLFFSFVCNSIVTIIHLTAV). The Extracellular segment spans residues 200 to 210 (ANNQALVATNP). A helical transmembrane segment spans residues 211–239 (VSCKVFQFIHLYLMGCNYFWMLCEGIYLH). Topologically, residues 240–253 (TLIVVAVFAEKQHL) are cytoplasmic. The chain crosses the membrane as a helical span at residues 254–274 (MWYYFLGWGFPLIPACIHAVA). At 275–290 (RRLYYNDNCWISSDTH) the chain is on the extracellular side. The required for RAMP3 interaction stretch occupies residues 289–290 (TH). The chain crosses the membrane as a helical span at residues 291-315 (LLYIIHGPICAALLVNLFFLLNIVR). Residues 316–330 (VLITKLKVTHQAESN) are Cytoplasmic-facing. The chain crosses the membrane as a helical span at residues 331-352 (LYMKAVRATLILVPLLGIEFVL). Residues 353–367 (IPWRPEGKIAEEVYD) lie on the Extracellular side of the membrane. A helical transmembrane segment spans residues 368–388 (YIMHILVHYQGLLVSTIYCFF). The Cytoplasmic segment spans residues 389 to 462 (NGEVQAILRR…IVIKPEKLYD (74 aa)). Ser421 and Ser446 each carry phosphoserine.

This sequence belongs to the G-protein coupled receptor 2 family. In terms of assembly, heterodimer of CALCRL and RAMP1; the receptor complex functions as CGRP receptor. Heterodimer of CALCRL and RAMP2 or CALCRL and RAMP3; the complexes function as adrenomedullin receptor. In terms of tissue distribution, detected in lung and coronary artery.

The protein localises to the cell membrane. In terms of biological role, g protein-coupled receptor which specificity is determined by its interaction with receptor-activity-modifying proteins (RAMPs). Together with RAMP1, form the receptor complex for calcitonin-gene-related peptides CALCA/CGRP1 and CALCB/CGRP2. Together with RAMP2 or RAMP3, function as receptor complexes for adrenomedullin (ADM and ADM2). Ligand binding causes a conformation change that triggers signaling via guanine nucleotide-binding proteins (G proteins) and modulates the activity of downstream effectors. Activates cAMP-dependent pathway. The chain is Calcitonin gene-related peptide type 1 receptor (CALCRL) from Sus scrofa (Pig).